The following is a 59-amino-acid chain: Early growth response protein 1 (59 aa).

3 consecutive C2H2-type zinc fingers follow at residues 1–18, 24–46, and 52–59; these read CDRRFSRSDELTRHIRIH, FQCRICMRNFSRSDHLTTHIRTH, and FACDICGR.

This sequence belongs to the EGR C2H2-type zinc-finger protein family.

Its subcellular location is the nucleus. The protein localises to the cytoplasm. Transcriptional regulator. Recognizes and binds to the DNA sequence 5'-GCG(T/G)GGGCG-3'(EGR-site) in the promoter region of target genes. Binds double-stranded target DNA, irrespective of the cytosine methylation status. Regulates the transcription of numerous target genes, and thereby plays an important role in regulating the response to growth factors, DNA damage, and ischemia. Plays a role in the regulation of cell survival, proliferation and cell death. Mediates responses to ischemia and hypoxia; regulates the expression of proteins that are involved in inflammatory processes. Plays a role in regulating the expression of circadian clock genes. The sequence is that of Early growth response protein 1 (EGR1) from Serinus canaria (Island canary).